The primary structure comprises 304 residues: L-xylo-3-hexulose reductase (304 aa).

Positions 19, 68, and 107 each coordinate NADP(+). Catalysis depends on proton donor residues Ser163 and Ser164. Residues Tyr177, Lys181, and Ala209 each contribute to the NADP(+) site. The Proton acceptor role is filled by Tyr177. The active-site Lowers pKa of active site Tyr is Lys181.

The protein belongs to the short-chain dehydrogenases/reductases (SDR) family.

It carries out the reaction D-sorbitol + NADP(+) = L-xylo-3-hexulose + NADPH + H(+). Its pathway is carbohydrate degradation. L-xylulose reductase involved in the catabolism of D-galactose through an oxidoreductive pathway. Catalyzes the NADPH-dependent reduction of L-xylo-3-hexulose. Is also active with D-ribulose and L-xylulose, and to a lesser extent with D-xylulose, D-fructose and L- and D-sorbose. In the reverse reaction, shows activity with D-sorbitol and D-mannitol, low activity with xylitol, but no activity with galactitol, ribitol, and L- and D-arabitol. The protein is L-xylo-3-hexulose reductase of Hypocrea jecorina (strain QM6a) (Trichoderma reesei).